The chain runs to 187 residues: Prepronociceptin (187 aa).

Residues M1–S19 form the signal peptide. The propeptide occupies S20–L95. Repeat copies occupy residues D109–A114, D115–A120, and D121–A126. Residues D109–A126 form a 3 X 6 AA tandem repeats of D-A-E-P-G-A region. The disordered stretch occupies residues D109–E133. Residues P112–E131 are compositionally biased toward acidic residues. Residues T180–V187 constitute a propeptide that is removed on maturation.

The protein belongs to the opioid neuropeptide precursor family. Post-translationally, specific enzymatic cleavages at paired basic residues probably yield other active peptides besides nociceptin. The N-terminal domain contains 6 conserved cysteines thought to be involved in disulfide bonding and/or processing. In terms of tissue distribution, brain and spinal cord. Low levels in kidney and spleen.

It is found in the secreted. Functionally, ligand of the opioid receptor-like receptor OPRL1. It may act as a transmitter in the brain by modulating nociceptive and locomotor behavior. May be involved in neuronal differentiation and development. When administered intracerebroventricularly, nociceptin induces hyperalgesia and decreases locomotor activity. In terms of biological role, blocks nociceptin action in pain transmission by inhibiting nociceptin-induced hyperalgesia and allodynia. Its function is as follows. Has potent analgesic activity. This is Prepronociceptin (Pnoc) from Mus musculus (Mouse).